Here is a 661-residue protein sequence, read N- to C-terminus: COBRA-like protein 7 (661 aa).

The N-terminal stretch at 1–26 (MDSAPNFIPRLLLLSLLIVSIPLTSS) is a signal peptide. Positions 26–45 (SQSDANTTNPSPSPPSDSDL) are disordered. N-linked (GlcNAc...) asparagine glycans are attached at residues asparagine 31, asparagine 64, asparagine 122, asparagine 170, asparagine 314, asparagine 327, asparagine 356, asparagine 369, asparagine 398, asparagine 410, asparagine 430, asparagine 472, asparagine 551, and asparagine 561. Serine 637 carries GPI-anchor amidated serine lipidation. The propeptide at 638 to 661 (SQHRKHISVFLLALPVLALLILRA) is removed in mature form.

It belongs to the COBRA family. As to expression, expressed in roots, stems, leaves, flowers and siliques.

It is found in the cell membrane. The polypeptide is COBRA-like protein 7 (COBL7) (Arabidopsis thaliana (Mouse-ear cress)).